The following is a 582-amino-acid chain: Type I secretion system ATP-binding protein PrsD (582 aa).

Transmembrane regions (helical) follow at residues 22–42, 59–79, and 148–168; these read FIGVGVASALVNLLYLTGSFF, LIALSLLALLLYAFQGAFELI, and IAICFLFHPVIGLIAIIGGLI. The ABC transmembrane type-1 domain occupies 22 to 301; the sequence is FIGVGVASAL…AIGNWRGLVA (280 aa). In terms of domain architecture, ABC transporter spans 332-568; that stretch reads LTVEGLASGP…VLRPQQVERQ (237 aa). Position 366-373 (366-373) interacts with ATP; that stretch reads GPSASGKS.

The protein belongs to the ABC transporter superfamily. In terms of assembly, part of a type I secretion system composed of PrsD and PrsE.

It is found in the cell inner membrane. Mediates secretion of glycanase ExsH. The chain is Type I secretion system ATP-binding protein PrsD (prsD) from Rhizobium meliloti (strain 1021) (Ensifer meliloti).